Reading from the N-terminus, the 197-residue chain is CASP-like protein 1B2 (197 aa).

A2 is modified (N-acetylalanine). The Cytoplasmic portion of the chain corresponds to 2–17; the sequence is AREKIVVAGGTTKSWK. The helical transmembrane segment at 18–38 threads the bilayer; sequence LLLGLRIFAFMATLAAAIVMS. Topologically, residues 39–69 are extracellular; sequence LNKETKTLVVATIGTVPIKATLTAKFQHTPA. Residues 70–90 form a helical membrane-spanning segment; the sequence is FVFFVIANVMVSFHNLLMIVV. Topologically, residues 91-106 are cytoplasmic; the sequence is QIFSRKLEYKGLRLLS. Residues 107-127 form a helical membrane-spanning segment; it reads IAILDMLNATLVSAAANAAVF. Residues 128 to 156 are Extracellular-facing; sequence VAELGKNGNKHAKWNKVCDRFTTYCDHGA. A helical membrane pass occupies residues 157-177; it reads GAIIAAFAGVILMLLVSAVSI. At 178–197 the chain is on the cytoplasmic side; sequence SRLLINSKNFSTTATTTSVV.

This sequence belongs to the Casparian strip membrane proteins (CASP) family. In terms of assembly, homodimer and heterodimers.

The protein localises to the cell membrane. The chain is CASP-like protein 1B2 from Arabidopsis thaliana (Mouse-ear cress).